We begin with the raw amino-acid sequence, 447 residues long: Trigger factor (447 aa).

One can recognise a PPIase FKBP-type domain in the interval 159 to 244 (GDMLLMQVES…VREIKEEKLP (86 aa)).

This sequence belongs to the FKBP-type PPIase family. Tig subfamily.

Its subcellular location is the cytoplasm. It catalyses the reaction [protein]-peptidylproline (omega=180) = [protein]-peptidylproline (omega=0). Functionally, involved in protein export. Acts as a chaperone by maintaining the newly synthesized protein in an open conformation. Functions as a peptidyl-prolyl cis-trans isomerase. This Dehalococcoides mccartyi (strain ATCC BAA-2100 / JCM 16839 / KCTC 5957 / BAV1) protein is Trigger factor.